A 390-amino-acid chain; its full sequence is 1-deoxy-D-xylulose 5-phosphate reductoisomerase (390 aa).

T10, G11, S12, V13, G38, N40, and N123 together coordinate NADPH. Residue K124 participates in 1-deoxy-D-xylulose 5-phosphate binding. E125 contacts NADPH. D149 contacts Mn(2+). The 1-deoxy-D-xylulose 5-phosphate site is built by S150, E151, S175, and H198. Position 151 (E151) interacts with Mn(2+). G204 provides a ligand contact to NADPH. Residues S211, N216, K217, and E220 each coordinate 1-deoxy-D-xylulose 5-phosphate. Position 220 (E220) interacts with Mn(2+).

Belongs to the DXR family. Requires Mg(2+) as cofactor. Mn(2+) serves as cofactor.

The enzyme catalyses 2-C-methyl-D-erythritol 4-phosphate + NADP(+) = 1-deoxy-D-xylulose 5-phosphate + NADPH + H(+). It functions in the pathway isoprenoid biosynthesis; isopentenyl diphosphate biosynthesis via DXP pathway; isopentenyl diphosphate from 1-deoxy-D-xylulose 5-phosphate: step 1/6. Functionally, catalyzes the NADPH-dependent rearrangement and reduction of 1-deoxy-D-xylulose-5-phosphate (DXP) to 2-C-methyl-D-erythritol 4-phosphate (MEP). The protein is 1-deoxy-D-xylulose 5-phosphate reductoisomerase of Paracoccus denitrificans (strain Pd 1222).